The chain runs to 105 residues: MRGGGNMQQMMKQMQKMQKKMGEEQEKLKEEKVQGTAGGGMVTVTVSGHKEVLDVEIKEEAVDPDDIEMLQDLVIAATNEAMNKADELTQERLGKHTQGLNIPGM.

A disordered region spans residues 1–41 (MRGGGNMQQMMKQMQKMQKKMGEEQEKLKEEKVQGTAGGGM). The segment covering 7 to 16 (MQQMMKQMQK) has biased composition (low complexity). The segment covering 20–33 (KMGEEQEKLKEEKV) has biased composition (basic and acidic residues).

This sequence belongs to the YbaB/EbfC family. In terms of assembly, homodimer.

The protein resides in the cytoplasm. Its subcellular location is the nucleoid. Binds to DNA and alters its conformation. May be involved in regulation of gene expression, nucleoid organization and DNA protection. This Staphylococcus saprophyticus subsp. saprophyticus (strain ATCC 15305 / DSM 20229 / NCIMB 8711 / NCTC 7292 / S-41) protein is Nucleoid-associated protein SSP2277.